Consider the following 542-residue polypeptide: Glucans biosynthesis protein D (542 aa).

The tat-type signal signal peptide spans 1 to 31 (MHRRNLLKASMAIAAYTGLSATGLLASRAWA).

This sequence belongs to the OpgD/OpgG family. In terms of processing, predicted to be exported by the Tat system. The position of the signal peptide cleavage has not been experimentally proven.

It is found in the periplasm. The protein operates within glycan metabolism; osmoregulated periplasmic glucan (OPG) biosynthesis. Its function is as follows. Probably involved in the control of the structural glucose backbone of osmoregulated periplasmic glucans (OPGs). The chain is Glucans biosynthesis protein D from Pseudomonas fluorescens (strain Pf0-1).